A 228-amino-acid polypeptide reads, in one-letter code: MNPLLEKKFGDEFTRVENALTALRSGKGILVSDSPDRENEADLIFSAEFLTETQMAMLIRECSGIVCLCLTTEKVQALALPMMVSENTSGFQTAFTVSIEAKTGVKTGVSAADRVRTVKTAIAADAKPEELARPGHVFPLRARTGGVLERPGHTEATVDLMRLAGLSPYGVLCELTNPDGTMANLDEAIAFAEKHDFPVLTVEDVINYRLEKEREKSASPALFSVFEN.

D-ribulose 5-phosphate contacts are provided by residues 37 to 38 (RE), D42, 150 to 154 (RPGHT), and E174. E38 provides a ligand contact to Mg(2+). Residue H153 participates in Mg(2+) binding.

It belongs to the DHBP synthase family. Homodimer. The cofactor is Mg(2+). Requires Mn(2+) as cofactor.

It carries out the reaction D-ribulose 5-phosphate = (2S)-2-hydroxy-3-oxobutyl phosphate + formate + H(+). Its pathway is cofactor biosynthesis; riboflavin biosynthesis; 2-hydroxy-3-oxobutyl phosphate from D-ribulose 5-phosphate: step 1/1. Catalyzes the conversion of D-ribulose 5-phosphate to formate and 3,4-dihydroxy-2-butanone 4-phosphate. The polypeptide is 3,4-dihydroxy-2-butanone 4-phosphate synthase (Chloroherpeton thalassium (strain ATCC 35110 / GB-78)).